Consider the following 51-residue polypeptide: Sperm protamine P1 (51 aa).

Belongs to the protamine P1 family. Testis.

Its subcellular location is the nucleus. It localises to the chromosome. Functionally, protamines substitute for histones in the chromatin of sperm during the haploid phase of spermatogenesis. They compact sperm DNA into a highly condensed, stable and inactive complex. The sequence is that of Sperm protamine P1 (PRM1) from Piliocolobus badius (Western red colobus).